Here is a 175-residue protein sequence, read N- to C-terminus: Cell number regulator 9 (175 aa).

A run of 2 helical transmembrane segments spans residues 53-73 and 80-100; these read GLCC…AEIV and CGVA…HWIY.

This sequence belongs to the cornifelin family. In terms of tissue distribution, expressed in roots, coleoptiles, leaves and stalks.

The protein resides in the membrane. This Zea mays (Maize) protein is Cell number regulator 9 (CNR9).